A 175-amino-acid chain; its full sequence is Ribosome maturation factor RimM (175 aa).

Positions 96–175 constitute a PRC barrel domain; sequence EGDYYWHDLI…TITVDWDAGF (80 aa).

This sequence belongs to the RimM family. Binds ribosomal protein uS19.

The protein resides in the cytoplasm. An accessory protein needed during the final step in the assembly of 30S ribosomal subunit, possibly for assembly of the head region. Essential for efficient processing of 16S rRNA. May be needed both before and after RbfA during the maturation of 16S rRNA. It has affinity for free ribosomal 30S subunits but not for 70S ribosomes. The polypeptide is Ribosome maturation factor RimM (Actinobacillus pleuropneumoniae serotype 5b (strain L20)).